Here is a 540-residue protein sequence, read N- to C-terminus: Acyl-CoA synthetase 7 (540 aa).

ATP is bound by residues 186-194 (SSGTTGKPK), D415, R430, and K522. Residues 538–540 (AKL) carry the Microbody targeting signal motif.

This sequence belongs to the ATP-dependent AMP-binding enzyme family. Expressed in intestine.

The protein localises to the peroxisome. It carries out the reaction nonanoate + ATP + CoA = nonanoyl-CoA + AMP + diphosphate. The catalysed reaction is IC-asc-C7 + ATP + CoA = IC-asc-C7-CoA + AMP + diphosphate. It catalyses the reaction IC-asc-C9 + ATP + CoA = IC-asc-C9-CoA + AMP + diphosphate. Functionally, plays a role in ascaroside pheromones biosynthesis, which regulates development and behavior. Specifically, activates the side chain of medium-chain indol-3-carbonyl (IC)-ascarosides for shortening through beta-oxidation. Converts IC-asc-C7 and IC-asc-C9 into IC-asc-C7-CoA and IC-asc-C9-CoA, respectively. May play a role in fatty-acid metabolism by activating and converting nonanoate (C9) into nonanoyl-CoA (C9-CoA). This is Acyl-CoA synthetase 7 from Caenorhabditis elegans.